Reading from the N-terminus, the 203-residue chain is Small ribosomal subunit protein uS4 (203 aa).

The region spanning 93–156 (RRLDNVVYRL…MKVPAILEAV (64 aa)) is the S4 RNA-binding domain.

The protein belongs to the universal ribosomal protein uS4 family. As to quaternary structure, part of the 30S ribosomal subunit. Contacts protein S5. The interaction surface between S4 and S5 is involved in control of translational fidelity.

Functionally, one of the primary rRNA binding proteins, it binds directly to 16S rRNA where it nucleates assembly of the body of the 30S subunit. With S5 and S12 plays an important role in translational accuracy. The polypeptide is Small ribosomal subunit protein uS4 (Streptococcus agalactiae serotype Ia (strain ATCC 27591 / A909 / CDC SS700)).